We begin with the raw amino-acid sequence, 394 residues long: Chorismate synthase (394 aa).

Positions 42 and 48 each coordinate NADP(+). FMN is bound by residues 137 to 139 (RAS), 258 to 259 (QA), G302, 317 to 321 (KPIAT), and R343.

Belongs to the chorismate synthase family. Homotetramer. It depends on FMNH2 as a cofactor.

The enzyme catalyses 5-O-(1-carboxyvinyl)-3-phosphoshikimate = chorismate + phosphate. The protein operates within metabolic intermediate biosynthesis; chorismate biosynthesis; chorismate from D-erythrose 4-phosphate and phosphoenolpyruvate: step 7/7. Functionally, catalyzes the anti-1,4-elimination of the C-3 phosphate and the C-6 proR hydrogen from 5-enolpyruvylshikimate-3-phosphate (EPSP) to yield chorismate, which is the branch point compound that serves as the starting substrate for the three terminal pathways of aromatic amino acid biosynthesis. This reaction introduces a second double bond into the aromatic ring system. The sequence is that of Chorismate synthase from Streptomyces avermitilis (strain ATCC 31267 / DSM 46492 / JCM 5070 / NBRC 14893 / NCIMB 12804 / NRRL 8165 / MA-4680).